A 340-amino-acid polypeptide reads, in one-letter code: Protein B17 (340 aa).

It belongs to the orthopoxvirus B17 protein family.

This is Protein B17 from Variola virus (isolate Human/India/Ind3/1967) (VARV).